We begin with the raw amino-acid sequence, 118 residues long: HTH-type transcriptional regulator SarT (118 aa).

The segment at residues 55-78 (MRDIISYIGIDQSRIVKSVKELSK) is a DNA-binding region (H-T-H motif).

This sequence belongs to the SarA family.

Its subcellular location is the cytoplasm. In terms of biological role, transcriptional regulator acting as an intermediary between major regulators SarA and agr and virulence genes. Represses alpha-hemolysin (hla) gene expression. The protein is HTH-type transcriptional regulator SarT (sarT) of Staphylococcus aureus (strain Mu50 / ATCC 700699).